Here is a 100-residue protein sequence, read N- to C-terminus: Urease subunit gamma (100 aa).

The protein belongs to the urease gamma subunit family. As to quaternary structure, heterotrimer of UreA (gamma), UreB (beta) and UreC (alpha) subunits. Three heterotrimers associate to form the active enzyme.

The protein resides in the cytoplasm. It catalyses the reaction urea + 2 H2O + H(+) = hydrogencarbonate + 2 NH4(+). It participates in nitrogen metabolism; urea degradation; CO(2) and NH(3) from urea (urease route): step 1/1. The protein is Urease subunit gamma of Agrobacterium fabrum (strain C58 / ATCC 33970) (Agrobacterium tumefaciens (strain C58)).